We begin with the raw amino-acid sequence, 155 residues long: Small ribosomal subunit protein uS7 (155 aa).

Belongs to the universal ribosomal protein uS7 family. In terms of assembly, part of the 30S ribosomal subunit. Contacts proteins S9 and S11.

One of the primary rRNA binding proteins, it binds directly to 16S rRNA where it nucleates assembly of the head domain of the 30S subunit. Is located at the subunit interface close to the decoding center, probably blocks exit of the E-site tRNA. This Thermotoga petrophila (strain ATCC BAA-488 / DSM 13995 / JCM 10881 / RKU-1) protein is Small ribosomal subunit protein uS7.